We begin with the raw amino-acid sequence, 392 residues long: MSVINLSDLDLNSKRVLIRQDLNVPISNGVVTSDKRIKASLPTIKMALNQGAKVMLMSHRGRPIEGDPSDGFSLQPVADRLSELLNTTVRLEKDWLDGVEMNNGKVVLCENVRFNVGEMVNDDELSKRMAAICDIFVMDAFGTAHRAQASTYGVAKYAPIACSGPLLSEELDALGKALDNPKRPMVAIVGGSKVSTKLTVLESLSKIVDQLVVGGGIANTFIAAQGFNVGKSLCEYDLIPIAKKLMEDCEIPVSKDVVCGKEFSDVAEAETKASKDVADDDMIFDIGPKSAQQLADIMRNAGTIVWNGPVGVFEFDQFAGGTETLGKAIAESNAFSIAGGGDTLAAVDKYGIEDKISYISTGGGAFLEFLEGKKLPAVEVLEQRALEVIKLA.

Substrate is bound by residues Asp-21–Asn-23, Arg-36, His-59–Arg-62, Arg-113, and Arg-146. ATP is bound by residues Lys-197, Glu-314, and Gly-340–Thr-343.

It belongs to the phosphoglycerate kinase family. Monomer.

The protein localises to the cytoplasm. It carries out the reaction (2R)-3-phosphoglycerate + ATP = (2R)-3-phospho-glyceroyl phosphate + ADP. It functions in the pathway carbohydrate degradation; glycolysis; pyruvate from D-glyceraldehyde 3-phosphate: step 2/5. The polypeptide is Phosphoglycerate kinase (Vesicomyosocius okutanii subsp. Calyptogena okutanii (strain HA)).